Consider the following 179-residue polypeptide: Phospholipase A2 (179 aa).

Positions Met1–Ala21 are cleaved as a signal peptide. Positions Trp22 to Arg39 are excised as a propeptide. The Ca(2+) site is built by Trp47, Gly49, and Gly51. 5 disulfide bridges follow: Cys48-Cys70, Cys69-Cys109, Cys76-Cys102, Cys100-Cys133, and Cys142-Cys150. His73 is a catalytic residue. Asp74 contributes to the Ca(2+) binding site. The active site involves Asp103. N-linked (GlcNAc...) asparagine glycosylation occurs at Asn112.

Requires Ca(2+) as cofactor. Expressed by the venom gland.

The protein resides in the secreted. It catalyses the reaction a 1,2-diacyl-sn-glycero-3-phosphocholine + H2O = a 1-acyl-sn-glycero-3-phosphocholine + a fatty acid + H(+). Its function is as follows. PLA2 catalyzes the calcium-dependent hydrolysis of the 2-acyl groups in 3-sn-phosphoglycerides. The protein is Phospholipase A2 of Xylocopa appendiculata circumvolans (Japanese carpenter bee).